The following is a 167-amino-acid chain: Signal peptidase complex catalytic subunit SEC11 (167 aa).

At 1–6 (MNIRQQ) the chain is on the cytoplasmic side. A helical; Signal-anchor for type II membrane protein membrane pass occupies residues 7-24 (LTKFLGLFLTLASAFMFW). Residues 25-167 (KGLSVVTNSH…LALSSLLGSE (143 aa)) are Lumenal-facing. Catalysis depends on charge relay system residues S44, H83, and D109. Residues 153–164 (ALMGMLALSSLL) are C-terminal short (CTS) helix.

It belongs to the peptidase S26B family. As to quaternary structure, component of the signal peptidase complex (SPC) composed of a catalytic subunit SEC11 and three accessory subunits SPC1, SPC2 and SPC3. The complex induces a local thinning of the ER membrane which is used to measure the length of the signal peptide (SP) h-region of protein substrates. This ensures the selectivity of the complex towards h-regions shorter than 18-20 amino acids. SPC associates with the translocon complex.

Its subcellular location is the endoplasmic reticulum membrane. The enzyme catalyses Cleavage of hydrophobic, N-terminal signal or leader sequences from secreted and periplasmic proteins.. Catalytic component of the signal peptidase complex (SPC) which catalyzes the cleavage of N-terminal signal sequences from nascent proteins as they are translocated into the lumen of the endoplasmic reticulum. Specifically cleaves N-terminal signal peptides that contain a hydrophobic alpha-helix (h-region) shorter than 18-20 amino acids. In Eremothecium gossypii (strain ATCC 10895 / CBS 109.51 / FGSC 9923 / NRRL Y-1056) (Yeast), this protein is Signal peptidase complex catalytic subunit SEC11 (SEC11).